The following is a 497-amino-acid chain: MPKQHVYHLHPLGWENDPEEERFKVTTLDYLTVCSYNNYALFFKLEDSEKERAAEILKAGLERTLAQARHYCGTIEKDPGGGHSFTKKRNSTVRFFVQWLDAPEDADKYPSFEDLEKTNFSAVTLGDLEQWSVPPMTYGEKPEAHPDNSPVVSAFKANFIRGGLVFNIHHHHYTNDVMGWAGFVHQLAENCYAAVNGTKHPTWDPLNLDVSRLIKQEPPEDQKIDGPAPPERHPAHQVGMSLLFHLPKSKAAELKAKATPTDGTWISTYDAFSAFIWRNLTRIRAPVFNPDPKSTLYWCEAIDMRRRMHSPKVPPRIQHNVMFAVTSPTAPVTQPTVAQIMSEWSLSELASYIRRLTNSVTQENLDKTLEMVATIRDKTSLNTRVDAQPPLSILQTDHRDANITSADFGFAKPATYRHLLDRITEGVIIVYPPRDPLPESDEGCEFAIFYEKRLAQDLINDDEWSEYFEYRGVDAEDASEAKKANGTNGTNGVNGSS.

Ca(2+) is bound by residues aspartate 221 and isoleucine 224. Residues lysine 255 and aspartate 303 each coordinate CoA. Aspartate 386 serves as a coordination point for Ca(2+). Threonine 396 serves as a coordination point for CoA. Position 462 (aspartate 462) interacts with Ca(2+). Residues 477-497 (DASEAKKANGTNGTNGVNGSS) form a disordered region. Residues 485–497 (NGTNGTNGVNGSS) are compositionally biased toward low complexity.

It belongs to the trichothecene 3-O-acetyltransferase family.

Its pathway is secondary metabolite biosynthesis. Functionally, acetyltransferase; part of the gene cluster that mediates the biosynthesis of the tetraketides fugralins such as linear fugralin A and cyclic fugralin B, volatile compounds that play a role in the asexual reproductive cycle but are not involved in pathogenicity. One of the key features of fugralins is the presence of a double methyl group, which is only rarely encountered in fungal secondary metabolites. As the fugralins cluster does not contain an independent methyltransferase, the PKS FGR1 is probably responsible for adding two methyl groups to the same carbon atom. Fugralin B is similar to fugralin A except for a cyclization between the carboxylic acid C-8 and the alcohol on C-4 resulting in a six membered lactone ring, probably catalyzed by the cyclase FGR4. The exact role of the individual cluster genes remains unknown and further work is needed to unravel the biosynthetic pathway. The sequence is that of Acetyltransferase FGR3 from Gibberella zeae (strain ATCC MYA-4620 / CBS 123657 / FGSC 9075 / NRRL 31084 / PH-1) (Wheat head blight fungus).